The sequence spans 302 residues: D-alanine--D-alanine ligase (302 aa).

One can recognise an ATP-grasp domain in the interval 100-295; it reads KTVFDHHGIL…FNELIAKLIE (196 aa). 126–180 lines the ATP pocket; the sequence is QDLEPPVFIKPNSGGSSLGMTFARTAEELEKGIETVFSLGDSALVEEYTKGIEVT. Asp250, Glu262, and Asn264 together coordinate Mg(2+).

This sequence belongs to the D-alanine--D-alanine ligase family. Mg(2+) is required as a cofactor. Requires Mn(2+) as cofactor.

Its subcellular location is the cytoplasm. It catalyses the reaction 2 D-alanine + ATP = D-alanyl-D-alanine + ADP + phosphate + H(+). It functions in the pathway cell wall biogenesis; peptidoglycan biosynthesis. Functionally, cell wall formation. This chain is D-alanine--D-alanine ligase, found in Maridesulfovibrio salexigens (strain ATCC 14822 / DSM 2638 / NCIMB 8403 / VKM B-1763) (Desulfovibrio salexigens).